The following is a 63-amino-acid chain: Metallothionein-2 (63 aa).

The segment at 1-30 (MDPQDCTCAAGDSCSCAGSCKCKNCRCQSC) is beta. A divalent metal cation-binding residues include Cys-6, Cys-8, Cys-14, Cys-16, Cys-20, Cys-22, Cys-25, Cys-27, Cys-30, Cys-34, Cys-35, Cys-37, Cys-38, Cys-42, Cys-45, Cys-49, Cys-51, Cys-59, Cys-61, and Cys-62. The tract at residues 31 to 63 (RKSCCSCCPASCSNCAKGCVCKEPSSSKCSCCH) is alpha.

It belongs to the metallothionein superfamily. Type 1 family.

Metallothioneins have a high content of cysteine residues that bind various heavy metals. This chain is Metallothionein-2, found in Columba livia (Rock dove).